Reading from the N-terminus, the 523-residue chain is Light-independent protochlorophyllide reductase subunit B (523 aa).

Asp36 provides a ligand contact to [4Fe-4S] cluster. The active-site Proton donor is the Asp290. Position 425 to 426 (425 to 426) interacts with substrate; that stretch reads GL.

Belongs to the ChlB/BchB/BchZ family. As to quaternary structure, protochlorophyllide reductase is composed of three subunits; ChlL, ChlN and ChlB. Forms a heterotetramer of two ChlB and two ChlN subunits. [4Fe-4S] cluster is required as a cofactor.

It carries out the reaction chlorophyllide a + oxidized 2[4Fe-4S]-[ferredoxin] + 2 ADP + 2 phosphate = protochlorophyllide a + reduced 2[4Fe-4S]-[ferredoxin] + 2 ATP + 2 H2O. Its pathway is porphyrin-containing compound metabolism; chlorophyll biosynthesis (light-independent). Component of the dark-operative protochlorophyllide reductase (DPOR) that uses Mg-ATP and reduced ferredoxin to reduce ring D of protochlorophyllide (Pchlide) to form chlorophyllide a (Chlide). This reaction is light-independent. The NB-protein (ChlN-ChlB) is the catalytic component of the complex. The sequence is that of Light-independent protochlorophyllide reductase subunit B from Prochlorococcus marinus (strain MIT 9215).